The following is a 146-amino-acid chain: Dihydroneopterin aldolase 1 (146 aa).

Substrate is bound by residues Glu-41, Tyr-73, and 92-93; that span reads LE. Lys-119 acts as the Proton donor/acceptor in catalysis.

Belongs to the DHNA family. In terms of assembly, homooctamer. Forms a hollow cylinder assembled from two ring-shaped tetramers. Expressed in roots, leaves, stems and siliques.

It catalyses the reaction 7,8-dihydroneopterin = 6-hydroxymethyl-7,8-dihydropterin + glycolaldehyde. It functions in the pathway cofactor biosynthesis; tetrahydrofolate biosynthesis; 2-amino-4-hydroxy-6-hydroxymethyl-7,8-dihydropteridine diphosphate from 7,8-dihydroneopterin triphosphate: step 3/4. Its function is as follows. Catalyzes the conversion of 7,8-dihydroneopterin into 6-hydroxymethyl-7,8-dihydropterin, a biosynthetic precursor of the vitamin tetrahydrofolate. Can use L-threo-dihydroneopterin and D-erythro-dihydroneopterin as substrates for the formation of 6-hydroxymethyldihydropterin, but it can also catalyze the epimerization of carbon 2' of dihydroneopterin and dihydromonapterin. The protein is Dihydroneopterin aldolase 1 of Arabidopsis thaliana (Mouse-ear cress).